We begin with the raw amino-acid sequence, 514 residues long: MLASLQDILDTVKANNLTYHQKLMTLGNIAERLFDPRDLLGYTDEEWGFLQNQMICDLCEGYAIYRPRYILPDYNVYIQKGCEFLELPPPKDLDEALDGLLILYSHVPSITTYPVYIGRLDVLLEPFITDEEKDYIKIKRFLNHIDKTVPDSFCHANIGPYDTKAGRLILRAVIDLEAPTPNMTIRYDKSKTSREFAELAAKACLLVSKPSFANDAYYISDLGEEYGVASCYNALPECGGAYTLTRLRLGTIARTCKSADEMLNELLPRVAKCALSTMDKRHKFVVEESNFFNSSFLEKEGFIKRTNFTGMFAIVGLADATNHLLQCEGLNETFGKSVRGDEIATAIMDKLKEITDAHEGVYAERTGNRYLLHAQVGASNHEEDKRNAPAHRIRVGEEPTLLAHLKQSAPFHKYFPSGTGDLFAFDQTYVDHCDAVVDIIDGAFSLGYRYITTYLKNTDLIRVTGYLVKKSEVEKYRKGEVALRDTTWYGSGTDECANVFDRQLRDEKDVIAEK.

This sequence to E.coli YjjI.

This is an uncharacterized protein from Haemophilus influenzae (strain ATCC 51907 / DSM 11121 / KW20 / Rd).